Here is a 135-residue protein sequence, read N- to C-terminus: Succinate dehydrogenase assembly factor 2, mitochondrial (135 aa).

The protein belongs to the SDHAF2 family. Interacts with the flavoprotein subunit within the SDH catalytic dimer.

The protein resides in the mitochondrion matrix. Functionally, plays an essential role in the assembly of succinate dehydrogenase (SDH), an enzyme complex (also referred to as respiratory complex II) that is a component of both the tricarboxylic acid (TCA) cycle and the mitochondrial electron transport chain, and which couples the oxidation of succinate to fumarate with the reduction of ubiquinone (coenzyme Q) to ubiquinol. Required for flavinylation (covalent attachment of FAD) of the flavoprotein subunit of the SDH catalytic dimer. The sequence is that of Succinate dehydrogenase assembly factor 2, mitochondrial from Meyerozyma guilliermondii (strain ATCC 6260 / CBS 566 / DSM 6381 / JCM 1539 / NBRC 10279 / NRRL Y-324) (Yeast).